Here is a 518-residue protein sequence, read N- to C-terminus: MELVLKLISSFCAIVVVILLGWRIFNWVWLRPRKLEKYLRNQGFNGNSYRLFFGDVKEMIVMLKEAKSKPINLYDDIIPRIIPLNQKIITNYGKNSFLWLGPKPMVHIMNPDHIKDVLSKFYQFQKPRHNPLTKLLATGVADAEGDRWAKHRKLINPAFHLEKLKNMLPAIYLSSSEIVTKWEEMVSTKGQFELDVLPYLETLTSDVISRTAFGSSYEEGRKIFQLQREQAELIIQASQTIYLPGMRFLPTKRNKRMKEIAKEVKIALKSIINKRLKAMEAGERSSHDDLLGILLESNSKEIKQHGNTNFGLTVDEVIEECKLFFFAGQETTSNLLVWTMILLSQHQDWQKRAKEEVLRTFGNNKPDFDGLNHLKVVNMILLEVLRLYPPILSLDRTIYEEIKLGEISLPAGVILLLPIILLHYDQEIWGDDAKEFNPERFSEGVLKATKGRVTYFPFSWGPRICIGQNFAMLEAKMAMAMILQRFSFVLSPSYAHAPHAIITLQPQYGAHLILHSLI.

The chain crosses the membrane as a helical span at residues 2–22 (ELVLKLISSFCAIVVVILLGW). C465 lines the heme pocket.

It belongs to the cytochrome P450 family. The cofactor is heme.

Its subcellular location is the membrane. Probable heme-thiolate monooxygenase. The sequence is that of Cytochrome P450 CYP72A219 from Panax ginseng (Korean ginseng).